The sequence spans 264 residues: NFAT activation molecule 1 (264 aa).

An N-terminal signal peptide occupies residues 1–37; sequence MESWLLRRGARVRCLHPPSWLPAWCFLCLLPVPQTLQ. At 38–159 the chain is on the extracellular side; the sequence is LTGLVSLTHT…QPPAFKVQEA (122 aa). One can recognise an Ig-like V-type domain in the interval 49–145; the sequence is LPIMVSLANT…QSDGVVILVR (97 aa). A disulfide bridge connects residues Cys-64 and Cys-110. 2 N-linked (GlcNAc...) asparagine glycosylation sites follow: Asn-105 and Asn-118. A helical membrane pass occupies residues 160–180; sequence LMLGFTSLMSVLGVLGTALLL. Topologically, residues 181 to 264 are cytoplasmic; sequence WKKKQISVLG…NEFNLVYENL (84 aa). One can recognise an ITAM domain in the interval 212-232; it reads ESVYTSLQRRETEVYACMKEE. Tyr-215 and Tyr-226 each carry phosphotyrosine.

As to quaternary structure, no direct interaction with the B-cell antigen receptor (BCR). Interacts with SYK; probably involved in BCR signaling. Interacts with ZAP70. In terms of processing, N-glycosylated. As to expression, highly expressed in the spleen, expressed by both B- and CD4+ and CD8+ T-cells, as well as non-T- and non-B-cells, including macrophages and neutrophils. Expressed at low levels, if any, in non-immune tissue.

The protein localises to the cell membrane. In terms of biological role, may function in immune system as a receptor which activates via the calcineurin/NFAT-signaling pathway the downstream cytokine gene promoters. Activates the transcription of IL-13 and TNF-alpha promoters. May be involved in the regulation of B-cell, but not T-cell, development. The chain is NFAT activation molecule 1 (Nfam1) from Mus musculus (Mouse).